Reading from the N-terminus, the 288-residue chain is Glycine--tRNA ligase alpha subunit (288 aa).

The protein belongs to the class-II aminoacyl-tRNA synthetase family. As to quaternary structure, tetramer of two alpha and two beta subunits.

It localises to the cytoplasm. The enzyme catalyses tRNA(Gly) + glycine + ATP = glycyl-tRNA(Gly) + AMP + diphosphate. This Rickettsia africae (strain ESF-5) protein is Glycine--tRNA ligase alpha subunit.